Here is a 479-residue protein sequence, read N- to C-terminus: GTPase Der (479 aa).

EngA-type G domains follow at residues 3 to 167 (FTLA…EAAA) and 191 to 366 (LQIA…ATWN). Residues 9-16 (GRPNVGKS), 56-60 (DTAGL), 119-122 (NKAE), 197-204 (GRPNAGKS), 244-248 (DTAGM), and 309-312 (NKWD) contribute to the GTP site. The region spanning 367-453 (TRISTARLNQ…RLWMRSQADD (87 aa)) is the KH-like domain. Residues 449–479 (SQADDNPYKNRKKSTPSRLNKHVRKGETKKG) form a disordered region. Residues 457-472 (KNRKKSTPSRLNKHVR) are compositionally biased toward basic residues.

The protein belongs to the TRAFAC class TrmE-Era-EngA-EngB-Septin-like GTPase superfamily. EngA (Der) GTPase family. Associates with the 50S ribosomal subunit.

Its function is as follows. GTPase that plays an essential role in the late steps of ribosome biogenesis. The chain is GTPase Der from Jannaschia sp. (strain CCS1).